A 323-amino-acid chain; its full sequence is MKPSVILYKTLPDDLLQRLEEHFSVTQVKNLRPETVSQHAEAFAQAEGLLGSSEKVDAALLEKMPKLRATSTVSVGYDNFDVEALNARRVLLMHTPTVLTETVADTVMALVLSTARRVVEVAERVKAGEWTKSIGPDWFGSDVHHKTLGIVGMGRIGMALAQRAHFGFGMPILYNARRQHPQAEERFNARYCDLDTLLQEADFVCLILPLSEETHHLFGQAQFAKMKSSAIFINAGRGPVVDEQALIAALQAGEIHAAGLDVFEHEPLAKDSPLLTLPNVVALPHIGSATHETRYNMAACAVDNLIDALNGNVEKNCVNPQVK.

Catalysis depends on residues Arg-237 and Glu-266. His-285 serves as the catalytic Proton donor.

Belongs to the D-isomer specific 2-hydroxyacid dehydrogenase family. GhrB subfamily. Homodimer.

The protein resides in the cytoplasm. It catalyses the reaction glycolate + NADP(+) = glyoxylate + NADPH + H(+). The enzyme catalyses (R)-glycerate + NAD(+) = 3-hydroxypyruvate + NADH + H(+). The catalysed reaction is (R)-glycerate + NADP(+) = 3-hydroxypyruvate + NADPH + H(+). Its function is as follows. Catalyzes the NADPH-dependent reduction of glyoxylate and hydroxypyruvate into glycolate and glycerate, respectively. The chain is Glyoxylate/hydroxypyruvate reductase B from Klebsiella pneumoniae (strain 342).